Consider the following 517-residue polypeptide: Protein AGENET DOMAIN (AGD)-CONTAINING P1 (517 aa).

A disordered region spans residues M1 to L35. Plant Agenet, chromatin-binding regions lie at residues S37 to S111 and K117 to D173. The segment at K177–E202 is disordered. Positions E181 to E202 are enriched in acidic residues. Plant Agenet, chromatin-binding stretches follow at residues Q219–E287, I289–D345, Q378–V446, and S449–D505.

Expressed ubiquitously during vegetative stage, in meristems (e.g. root tips and shoot apical meristem), and in ovules and young seeds during reproductive stage.

The protein localises to the nucleus. In terms of biological role, heterochromatin-binding protein that preferentially occupies long transposons and specifically recognizes the histone H3 'Lys-9' methylation (H3K9me) marks, with a stronger affinity for dimethylated H3K9 (H3K9me2). Required for transcriptional silencing, non-CG DNA methylation (e.g. CHG and CHH regions), and H3K9 dimethylation (H3K9me2) at some loci. Mediates heterochromatin phase separation and chromocenter formation. The protein is Protein AGENET DOMAIN (AGD)-CONTAINING P1 of Arabidopsis thaliana (Mouse-ear cress).